We begin with the raw amino-acid sequence, 180 residues long: NADH-quinone oxidoreductase subunit I (180 aa).

4Fe-4S ferredoxin-type domains are found at residues 50–80 and 90–119; these read LTRD…LQKA and EFFR…LTPD. [4Fe-4S] cluster contacts are provided by C60, C63, C66, C70, C99, C102, C105, and C109.

It belongs to the complex I 23 kDa subunit family. NDH-1 is composed of 13 different subunits. Subunits NuoA, H, J, K, L, M, N constitute the membrane sector of the complex. Requires [4Fe-4S] cluster as cofactor.

It localises to the cell inner membrane. It carries out the reaction a quinone + NADH + 5 H(+)(in) = a quinol + NAD(+) + 4 H(+)(out). Its function is as follows. NDH-1 shuttles electrons from NADH, via FMN and iron-sulfur (Fe-S) centers, to quinones in the respiratory chain. The immediate electron acceptor for the enzyme in this species is believed to be ubiquinone. Couples the redox reaction to proton translocation (for every two electrons transferred, four hydrogen ions are translocated across the cytoplasmic membrane), and thus conserves the redox energy in a proton gradient. This Yersinia pseudotuberculosis serotype O:1b (strain IP 31758) protein is NADH-quinone oxidoreductase subunit I.